We begin with the raw amino-acid sequence, 228 residues long: Protein boule (228 aa).

Positions 33 to 110 (NRIFVGGISG…RKLNIAPAIK (78 aa)) constitute an RRM domain. The DAZ domain maps to 151-178 (PAAGVPAIYPPSAMQYQPFYQYYSVPMN). The segment covering 193-214 (PLLHSPTSNPHSPHSQSHPQSP) has biased composition (low complexity). Positions 193-228 (PLLHSPTSNPHSPHSQSHPQSPCWSIEDLRDTLPRV) are disordered. Residues 219–228 (EDLRDTLPRV) show a composition bias toward basic and acidic residues.

It belongs to the RRM DAZ family. Interacts with the translational regulator orb2. As to expression, testis specific.

It localises to the nucleus. The protein resides in the cytoplasm. Functionally, RNA-binding protein that plays a central role in spermatogenesis. Required for meiotic entry and germline differentiation, at the transition between G2 and M phases of meiosis I. Acts by regulating translation of specific mRNAs, possibly by binding to their 3'-UTR. Essential for translation of twine (twe) mRNA. Required for the expression of various genes such as CG6784, CG17210, CG15841 scpr-B, scpr-C, and rho-6. This is Protein boule (bol) from Drosophila melanogaster (Fruit fly).